The following is a 184-amino-acid chain: ATP-dependent protease subunit HslV (184 aa).

The active site involves Thr12. Residues Ala166, Cys169, and Thr172 each contribute to the Na(+) site.

This sequence belongs to the peptidase T1B family. HslV subfamily. In terms of assembly, a double ring-shaped homohexamer of HslV is capped on each side by a ring-shaped HslU homohexamer. The assembly of the HslU/HslV complex is dependent on binding of ATP.

It is found in the cytoplasm. The catalysed reaction is ATP-dependent cleavage of peptide bonds with broad specificity.. Allosterically activated by HslU binding. Its function is as follows. Protease subunit of a proteasome-like degradation complex believed to be a general protein degrading machinery. The protein is ATP-dependent protease subunit HslV of Brucella ovis (strain ATCC 25840 / 63/290 / NCTC 10512).